The sequence spans 21 residues: Thylakoid lumenal 13.8 kDa protein (21 aa).

The protein localises to the plastid. The protein resides in the chloroplast thylakoid lumen. The chain is Thylakoid lumenal 13.8 kDa protein from Spinacia oleracea (Spinach).